We begin with the raw amino-acid sequence, 420 residues long: Carbohydrate sulfotransferase 1 (420 aa).

Residue Met1 is a topological domain, cytoplasmic. The helical; Signal-anchor for type II membrane protein transmembrane segment at 2–23 threads the bilayer; it reads QCSWKAVILLALVSIAIQYTAI. The Lumenal portion of the chain corresponds to 24-420; the sequence is RTFTAKPFHI…IEDKTFIPFL (397 aa). N-linked (GlcNAc...) asparagine glycosylation is present at Asn64. Residue 77–83 coordinates 3'-phosphoadenylyl sulfate; sequence TRSGSSF. N-linked (GlcNAc...) asparagine glycosylation is found at Asn153 and Asn197. 242-250 is a 3'-phosphoadenylyl sulfate binding site; that stretch reads RDPRGILSS. N-linked (GlcNAc...) asparagine glycosylation is found at Asn342 and Asn405.

The protein belongs to the sulfotransferase 1 family. Gal/GlcNAc/GalNAc subfamily.

The protein localises to the golgi apparatus membrane. It catalyses the reaction 3'-phosphoadenylyl sulfate + keratan = adenosine 3',5'-bisphosphate + keratan 6'-sulfate.. In terms of biological role, sulfotransferase that utilizes 3'-phospho-5'-adenylyl sulfate (PAPS) as sulfonate donor to catalyze the transfer of sulfate to position 6 of galactose (Gal) residues of keratan. This chain is Carbohydrate sulfotransferase 1 (chst1), found in Danio rerio (Zebrafish).